A 227-amino-acid polypeptide reads, in one-letter code: Cytochrome c oxidase subunit 2 (227 aa).

Residues 1-26 (MATWSNLNLQNSSSPLMEQLIFFHDH) are Mitochondrial intermembrane-facing. A helical transmembrane segment spans residues 27–48 (TLMILLMITVLVAYIMSMLFFN). The Mitochondrial matrix segment spans residues 49 to 62 (LYTNRFLLEGQTIE). A helical transmembrane segment spans residues 63–82 (IIWTILPAITLIFIALPSLR). Topologically, residues 83–227 (LLYLLDESMD…FINWIKNYSS (145 aa)) are mitochondrial intermembrane. The Cu cation site is built by histidine 160, cysteine 195, glutamate 197, cysteine 199, histidine 203, and methionine 206. Glutamate 197 provides a ligand contact to Mg(2+).

It belongs to the cytochrome c oxidase subunit 2 family. As to quaternary structure, component of the cytochrome c oxidase (complex IV, CIV), a multisubunit enzyme composed of a catalytic core of 3 subunits and several supernumerary subunits. The complex exists as a monomer or a dimer and forms supercomplexes (SCs) in the inner mitochondrial membrane with ubiquinol-cytochrome c oxidoreductase (cytochrome b-c1 complex, complex III, CIII). The cofactor is Cu cation.

The protein localises to the mitochondrion inner membrane. It catalyses the reaction 4 Fe(II)-[cytochrome c] + O2 + 8 H(+)(in) = 4 Fe(III)-[cytochrome c] + 2 H2O + 4 H(+)(out). Its function is as follows. Component of the cytochrome c oxidase, the last enzyme in the mitochondrial electron transport chain which drives oxidative phosphorylation. The respiratory chain contains 3 multisubunit complexes succinate dehydrogenase (complex II, CII), ubiquinol-cytochrome c oxidoreductase (cytochrome b-c1 complex, complex III, CIII) and cytochrome c oxidase (complex IV, CIV), that cooperate to transfer electrons derived from NADH and succinate to molecular oxygen, creating an electrochemical gradient over the inner membrane that drives transmembrane transport and the ATP synthase. Cytochrome c oxidase is the component of the respiratory chain that catalyzes the reduction of oxygen to water. Electrons originating from reduced cytochrome c in the intermembrane space (IMS) are transferred via the dinuclear copper A center (CU(A)) of subunit 2 and heme A of subunit 1 to the active site in subunit 1, a binuclear center (BNC) formed by heme A3 and copper B (CU(B)). The BNC reduces molecular oxygen to 2 water molecules using 4 electrons from cytochrome c in the IMS and 4 protons from the mitochondrial matrix. This chain is Cytochrome c oxidase subunit 2 (COII), found in Acheta domesticus (House cricket).